Consider the following 382-residue polypeptide: Anhydro-N-acetylmuramic acid kinase (382 aa).

ATP is bound at residue 22–29 (GTSMDGVD).

The protein belongs to the anhydro-N-acetylmuramic acid kinase family.

It carries out the reaction 1,6-anhydro-N-acetyl-beta-muramate + ATP + H2O = N-acetyl-D-muramate 6-phosphate + ADP + H(+). It participates in amino-sugar metabolism; 1,6-anhydro-N-acetylmuramate degradation. The protein operates within cell wall biogenesis; peptidoglycan recycling. In terms of biological role, catalyzes the specific phosphorylation of 1,6-anhydro-N-acetylmuramic acid (anhMurNAc) with the simultaneous cleavage of the 1,6-anhydro ring, generating MurNAc-6-P. Is required for the utilization of anhMurNAc either imported from the medium or derived from its own cell wall murein, and thus plays a role in cell wall recycling. The chain is Anhydro-N-acetylmuramic acid kinase from Burkholderia lata (strain ATCC 17760 / DSM 23089 / LMG 22485 / NCIMB 9086 / R18194 / 383).